A 586-amino-acid polypeptide reads, in one-letter code: Ezrin (586 aa).

The FERM domain maps to 2–295; the sequence is PKPINVRVTT…GNHELYMRRR (294 aa). Lysine 60 is modified (N6-acetyllysine). The short motif at 115-120 is the [IL]-x-C-x-x-[DE] motif element; sequence IYCPPE. Residue tyrosine 146 is modified to Phosphotyrosine; by PDGFR. Residues 244–586 form an interaction with SCYL3 region; that stretch reads EIRNISFNDK…KQRIDEFEAM (343 aa). Positions 302–462 form a coiled coil; sequence VQQMKAQARE…QDDLVKTKEE (161 aa). A disordered region spans residues 306–338; it reads KAQAREEKHQKQLERQQLETEKKRRETVEREKE. Basic and acidic residues predominate over residues 308 to 338; the sequence is QAREEKHQKQLERQQLETEKKRRETVEREKE. Phosphoserine is present on serine 366. Tyrosine 478 carries the phosphotyrosine modification. Phosphoserine is present on serine 535. Threonine 567 is subject to Phosphothreonine; by ROCK2 and PKC/PRKCI.

Interacts with PODXL and NHERF2. Found in a complex with EZR, PODXL and NHERF2. Interacts with PALS1. Interacts with MCC, PLEKHG6, SCYL3/PACE1, NHERF1 and TMEM8B. Interacts (when phosphorylated) with FES/FPS. Interacts with dimeric S100P, the interaction may be activating through unmasking of F-actin binding sites. Identified in complexes that contain VIM, EZR, AHNAK, BFSP1, BFSP2, ANK2, PLEC, PRX and spectrin. Detected in a complex composed of at least EZR, AHNAK, PPL and PRX. Interacts with PDPN (via cytoplasmic domain); activates RHOA and promotes epithelial-mesenchymal transition. Interacts with SPN/CD43 cytoplasmic tail, CD44 and ICAM2. Interacts with SLC9A3; interaction targets SLC9A3 to the apical membrane. Interacts with SLC9A1; regulates interactions of SLC9A1 with cytoskeletal and promotes stress fiber formation. Interacts with CLIC5; may work together in a complex which also includes RDX and MYO6 to stabilize linkages between the plasma membrane and subjacent actin cytoskeleton at the base of stereocilia. In terms of processing, phosphorylated by tyrosine-protein kinases. Phosphorylation by ROCK2 suppresses the head-to-tail association of the N-terminal and C-terminal halves resulting in an opened conformation which is capable of actin and membrane-binding. Post-translationally, S-nitrosylation is induced by interferon-gamma and oxidatively-modified low-densitity lipoprotein (LDL(ox)) possibly implicating the iNOS-S100A8/9 transnitrosylase complex. In terms of tissue distribution, glomerular epithelium cell (podocyte). Expressed in cerebrum, cerebellum and hippocampus (at protein level). Expressed in the small intestine, lung, kidney and ovaries.

The protein localises to the apical cell membrane. It is found in the cell projection. Its subcellular location is the microvillus membrane. It localises to the ruffle membrane. The protein resides in the cytoplasm. The protein localises to the cell cortex. It is found in the cytoskeleton. Its subcellular location is the microvillus. With respect to regulation, a head-to-tail association, of the N-terminal and C-terminal halves results in a closed conformation (inactive form) which is incapable of actin or membrane-binding. Probably involved in connections of major cytoskeletal structures to the plasma membrane. In epithelial cells, required for the formation of microvilli and membrane ruffles on the apical pole. Along with PLEKHG6, required for normal macropinocytosis. This Rattus norvegicus (Rat) protein is Ezrin (Ezr).